Here is a 691-residue protein sequence, read N- to C-terminus: Elongation factor G (691 aa).

The tr-type G domain maps to 10 to 284 (KMYRNIGIMA…AIVKYLPSPL (275 aa)). Residues 19–26 (AHIDAGKT), 83–87 (DTPGH), and 137–140 (NKMD) contribute to the GTP site.

The protein belongs to the TRAFAC class translation factor GTPase superfamily. Classic translation factor GTPase family. EF-G/EF-2 subfamily.

The protein resides in the cytoplasm. Functionally, catalyzes the GTP-dependent ribosomal translocation step during translation elongation. During this step, the ribosome changes from the pre-translocational (PRE) to the post-translocational (POST) state as the newly formed A-site-bound peptidyl-tRNA and P-site-bound deacylated tRNA move to the P and E sites, respectively. Catalyzes the coordinated movement of the two tRNA molecules, the mRNA and conformational changes in the ribosome. The chain is Elongation factor G from Clostridium tetani (strain Massachusetts / E88).